The following is a 101-amino-acid chain: Co-chaperonin GroES (101 aa).

It belongs to the GroES chaperonin family. As to quaternary structure, heptamer of 7 subunits arranged in a ring. Interacts with the chaperonin GroEL.

The protein resides in the cytoplasm. Its function is as follows. Together with the chaperonin GroEL, plays an essential role in assisting protein folding. The GroEL-GroES system forms a nano-cage that allows encapsulation of the non-native substrate proteins and provides a physical environment optimized to promote and accelerate protein folding. GroES binds to the apical surface of the GroEL ring, thereby capping the opening of the GroEL channel. The protein is Co-chaperonin GroES of Thermus thermophilus (strain ATCC BAA-163 / DSM 7039 / HB27).